The following is a 410-amino-acid chain: Adenosine receptor A2a (410 aa).

Residues 1 to 4 (MGSS) are Extracellular-facing. A helical membrane pass occupies residues 5-29 (VYIMVELAIAVLAILGNVLVCWAVW). Over 30–39 (INSNLQNVTN) the chain is Cytoplasmic. A helical membrane pass occupies residues 40–63 (FFVVSLAAADIAVGVLAIPFAITI). Topologically, residues 64–74 (STGFCAACHGC) are extracellular. 3 disulfides stabilise this stretch: Cys68/Cys154, Cys71/Cys143, and Cys74/Cys161. A helical membrane pass occupies residues 75-97 (LFFACFVLVLTQSSIFSLLAIAI). Residues 98–117 (DRYIAIRIPLRYNGLVTGMR) lie on the Cytoplasmic side of the membrane. Residues 118–140 (AKGIIAICWVLSFAIGLTPMLGW) traverse the membrane as a helical segment. Over 141 to 168 (NNCSQKDENSTKTCGEGRVTCLFEDVVP) the chain is Extracellular. 2 N-linked (GlcNAc...) asparagine glycosylation sites follow: Asn142 and Asn149. Adenosine is bound at residue Glu164. Residues 169-193 (MNYMVYYNFFAFVLLPLLLMLAIYL) form a helical membrane-spanning segment. Residues 194-229 (RIFLAARRQLKQMESQPLPGERTRSTLQKEVHAAKS) are Cytoplasmic-facing. A helical membrane pass occupies residues 230–253 (LAIIVGLFALCWLPLHIINCFTFF). Asn248 serves as a coordination point for adenosine. A disulfide bridge links Cys254 with Cys257. Residues 254-261 (CSTCQHAP) are Extracellular-facing. The chain crosses the membrane as a helical span at residues 262-285 (PWLMYLAIILSHSNSVVNPFIYAY). 2 residues coordinate adenosine: Ser272 and His273. Topologically, residues 286–410 (RIREFRQTFR…ASWSSEFAPS (125 aa)) are cytoplasmic. Residues 322–410 (HSTEGEQVSL…ASWSSEFAPS (89 aa)) form an interaction with GAS2L2 region. The interval 342-410 (ANGSAPHSGR…ASWSSEFAPS (69 aa)) is disordered. Residues 377 to 389 (TQEHQEGQEHPGL) show a composition bias toward basic and acidic residues. A compositionally biased stretch (polar residues) spans 401-410 (ASWSSEFAPS).

This sequence belongs to the G-protein coupled receptor 1 family. Interacts (via cytoplasmic C-terminal domain) with USP4; the interaction is direct. May interact with DRD4. Interacts with NECAB2. Interacts (via cytoplasmic C-terminal domain) with GAS2L2; interaction enhances receptor-mediated adenylyl cyclase activity. Post-translationally, ubiquitinated. Deubiquitinated by USP4; leading to stabilization and expression at the cell surface.

The protein resides in the cell membrane. Its function is as follows. Receptor for adenosine. The activity of this receptor is mediated by G proteins which activate adenylyl cyclase. In Mus musculus (Mouse), this protein is Adenosine receptor A2a (Adora2a).